We begin with the raw amino-acid sequence, 141 residues long: Large ribosomal subunit protein uL16 (141 aa).

The segment covering 1–17 (MLQPKRTKYRKVQKGRM) has biased composition (basic residues). The interval 1-29 (MLQPKRTKYRKVQKGRMKGNSQRGHELSN) is disordered.

Belongs to the universal ribosomal protein uL16 family. In terms of assembly, part of the 50S ribosomal subunit.

Binds 23S rRNA and is also seen to make contacts with the A and possibly P site tRNAs. In Flavobacterium johnsoniae (strain ATCC 17061 / DSM 2064 / JCM 8514 / BCRC 14874 / CCUG 350202 / NBRC 14942 / NCIMB 11054 / UW101) (Cytophaga johnsonae), this protein is Large ribosomal subunit protein uL16.